A 313-amino-acid chain; its full sequence is Cytochrome f (313 aa).

The signal sequence occupies residues 1–30 (MRNWSFSKAALTVSLLALSWSPFGPAEVQA). Residues Y31, C51, C54, and H55 each coordinate heme. A helical transmembrane segment spans residues 279–298 (VQGLIIFFAFVLIAQVFLVL).

This sequence belongs to the cytochrome f family. As to quaternary structure, the 4 large subunits of the cytochrome b6-f complex are cytochrome b6, subunit IV (17 kDa polypeptide, petD), cytochrome f and the Rieske protein, while the 4 small subunits are PetG, PetL, PetM and PetN. The complex functions as a dimer. It depends on heme as a cofactor.

It localises to the plastid. It is found in the chloroplast thylakoid membrane. Component of the cytochrome b6-f complex, which mediates electron transfer between photosystem II (PSII) and photosystem I (PSI), cyclic electron flow around PSI, and state transitions. The sequence is that of Cytochrome f from Nephroselmis olivacea (Green alga).